The primary structure comprises 253 residues: ATP synthase subunit b 1 (253 aa).

A helical transmembrane segment spans residues 5 to 27; sequence GWTVALQAVNFLILVLLLRHFLY.

The protein belongs to the ATPase B chain family. F-type ATPases have 2 components, F(1) - the catalytic core - and F(0) - the membrane proton channel. F(1) has five subunits: alpha(3), beta(3), gamma(1), delta(1), epsilon(1). F(0) has three main subunits: a(1), b(2) and c(10-14). The alpha and beta chains form an alternating ring which encloses part of the gamma chain. F(1) is attached to F(0) by a central stalk formed by the gamma and epsilon chains, while a peripheral stalk is formed by the delta and b chains.

It localises to the cell inner membrane. In terms of biological role, f(1)F(0) ATP synthase produces ATP from ADP in the presence of a proton or sodium gradient. F-type ATPases consist of two structural domains, F(1) containing the extramembraneous catalytic core and F(0) containing the membrane proton channel, linked together by a central stalk and a peripheral stalk. During catalysis, ATP synthesis in the catalytic domain of F(1) is coupled via a rotary mechanism of the central stalk subunits to proton translocation. Functionally, component of the F(0) channel, it forms part of the peripheral stalk, linking F(1) to F(0). In Rhodospirillum centenum (strain ATCC 51521 / SW), this protein is ATP synthase subunit b 1.